A 428-amino-acid polypeptide reads, in one-letter code: Adenylosuccinate synthetase (428 aa).

GTP is bound by residues 11–17 (GDEGKGK) and 39–41 (GHT). Catalysis depends on aspartate 12, which acts as the Proton acceptor. Mg(2+)-binding residues include aspartate 12 and glycine 39. Residues 12–15 (DEGK), 37–40 (NAGH), threonine 130, arginine 144, asparagine 226, threonine 241, and arginine 305 each bind IMP. Histidine 40 (proton donor) is an active-site residue. Substrate is bound at residue 301-307 (VTTGRKR). GTP contacts are provided by residues arginine 307, 333-335 (KLD), and 415-417 (GTG).

It belongs to the adenylosuccinate synthetase family. In terms of assembly, homodimer. The cofactor is Mg(2+).

The protein resides in the cytoplasm. It catalyses the reaction IMP + L-aspartate + GTP = N(6)-(1,2-dicarboxyethyl)-AMP + GDP + phosphate + 2 H(+). It functions in the pathway purine metabolism; AMP biosynthesis via de novo pathway; AMP from IMP: step 1/2. Plays an important role in the de novo pathway and in the salvage pathway of purine nucleotide biosynthesis. Catalyzes the first committed step in the biosynthesis of AMP from IMP. This is Adenylosuccinate synthetase from Komagataella phaffii (strain GS115 / ATCC 20864) (Yeast).